The following is a 388-amino-acid chain: Succinate--CoA ligase [ADP-forming] subunit beta (388 aa).

The 236-residue stretch at 9 to 244 folds into the ATP-grasp domain; that stretch reads KQIFAQYGLP…PSQEDAREAA (236 aa). ATP-binding positions include K46, 53-55, E99, A102, and E107; that span reads GRG. Mg(2+) contacts are provided by N199 and D213. Substrate is bound by residues N264 and 321 to 323; that span reads GIV.

This sequence belongs to the succinate/malate CoA ligase beta subunit family. In terms of assembly, heterotetramer of two alpha and two beta subunits. It depends on Mg(2+) as a cofactor.

It carries out the reaction succinate + ATP + CoA = succinyl-CoA + ADP + phosphate. The enzyme catalyses GTP + succinate + CoA = succinyl-CoA + GDP + phosphate. It participates in carbohydrate metabolism; tricarboxylic acid cycle; succinate from succinyl-CoA (ligase route): step 1/1. Succinyl-CoA synthetase functions in the citric acid cycle (TCA), coupling the hydrolysis of succinyl-CoA to the synthesis of either ATP or GTP and thus represents the only step of substrate-level phosphorylation in the TCA. The beta subunit provides nucleotide specificity of the enzyme and binds the substrate succinate, while the binding sites for coenzyme A and phosphate are found in the alpha subunit. The protein is Succinate--CoA ligase [ADP-forming] subunit beta of Mannheimia succiniciproducens (strain KCTC 0769BP / MBEL55E).